The following is a 492-amino-acid chain: Ribose import ATP-binding protein RbsA (492 aa).

ABC transporter domains follow at residues 3 to 239 (IEMK…VGRS) and 249 to 492 (AEIR…TGGK). 35–42 (GENGAGKS) is a binding site for ATP.

It belongs to the ABC transporter superfamily. Ribose importer (TC 3.A.1.2.1) family. The complex is composed of an ATP-binding protein (RbsA), two transmembrane proteins (RbsC) and a solute-binding protein (RbsB).

It is found in the cell membrane. The catalysed reaction is D-ribose(out) + ATP + H2O = D-ribose(in) + ADP + phosphate + H(+). In terms of biological role, part of the ABC transporter complex RbsABC involved in ribose import. Responsible for energy coupling to the transport system. The protein is Ribose import ATP-binding protein RbsA of Lactococcus lactis subsp. cremoris (strain SK11).